The sequence spans 481 residues: Cysteine--tRNA ligase (481 aa).

Cys27 lines the Zn(2+) pocket. Residues 29–39 (PTVYNYAHIGN) carry the 'HIGH' region motif. Positions 222, 247, and 251 each coordinate Zn(2+). A 'KMSKS' region motif is present at residues 279-283 (KMSKS). Lys282 contacts ATP.

It belongs to the class-I aminoacyl-tRNA synthetase family. Monomer. Zn(2+) is required as a cofactor.

The protein localises to the cytoplasm. The enzyme catalyses tRNA(Cys) + L-cysteine + ATP = L-cysteinyl-tRNA(Cys) + AMP + diphosphate. In Borrelia hermsii (strain HS1 / DAH), this protein is Cysteine--tRNA ligase.